The chain runs to 285 residues: NAD kinase (285 aa).

Catalysis depends on Asp64, which acts as the Proton acceptor. NAD(+)-binding positions include 64–65, 138–139, Arg149, Arg166, Asp168, Leu176, 179–184, and Gln238; these read DG, ND, and SGYTIS.

It belongs to the NAD kinase family. The cofactor is a divalent metal cation.

The protein resides in the cytoplasm. The catalysed reaction is NAD(+) + ATP = ADP + NADP(+) + H(+). Involved in the regulation of the intracellular balance of NAD and NADP, and is a key enzyme in the biosynthesis of NADP. Catalyzes specifically the phosphorylation on 2'-hydroxyl of the adenosine moiety of NAD to yield NADP. This Lawsonia intracellularis (strain PHE/MN1-00) protein is NAD kinase.